We begin with the raw amino-acid sequence, 223 residues long: Deoxyribose-phosphate aldolase (223 aa).

Asp-92 acts as the Proton donor/acceptor in catalysis. Lys-158 acts as the Schiff-base intermediate with acetaldehyde in catalysis. Lys-188 (proton donor/acceptor) is an active-site residue.

Belongs to the DeoC/FbaB aldolase family. DeoC type 1 subfamily.

The protein resides in the cytoplasm. It carries out the reaction 2-deoxy-D-ribose 5-phosphate = D-glyceraldehyde 3-phosphate + acetaldehyde. The protein operates within carbohydrate degradation; 2-deoxy-D-ribose 1-phosphate degradation; D-glyceraldehyde 3-phosphate and acetaldehyde from 2-deoxy-alpha-D-ribose 1-phosphate: step 2/2. Catalyzes a reversible aldol reaction between acetaldehyde and D-glyceraldehyde 3-phosphate to generate 2-deoxy-D-ribose 5-phosphate. This Mycobacterium avium (strain 104) protein is Deoxyribose-phosphate aldolase.